The chain runs to 1394 residues: Kinesin-like protein KIF27 (1394 aa).

The Kinesin motor domain occupies 5–341 (PIKVAVRIRP…LKYANRARNI (337 aa)). Position 84 to 91 (84 to 91 (GQTGSGKT)) interacts with ATP. Coiled coils occupy residues 352–418 (QADR…IEQA) and 498–554 (QKDL…ELAK). Disordered stretches follow at residues 559-582 (VPTS…RPHT) and 642-665 (FSDN…RSHS). Positions 571-580 (PDARASEKRP) are enriched in basic and acidic residues. 5 positions are modified to phosphoserine: serine 643, serine 646, serine 672, serine 675, and serine 704. 4 coiled-coil regions span residues 709–891 (LQKL…GQGE), 921–1078 (LDEQ…SIQS), 1118–1152 (NKVI…HELE), and 1186–1226 (DQDG…RLKD). Residues 886–916 (KAGQGEGLNPKAEDQDGFNLNRRKSPFRSGD) form a disordered region. Serine 999 is subject to Phosphoserine. Positions 1267–1280 (TENTKLNGSEREVD) are enriched in basic and acidic residues. Disordered regions lie at residues 1267-1319 (TENT…LQSI) and 1325-1344 (ARPF…PVRS). 2 stretches are compositionally biased toward polar residues: residues 1281 to 1295 (NSSS…TQQI) and 1309 to 1319 (IAPSSGQLQSI). Serine 1365 and serine 1387 each carry phosphoserine.

This sequence belongs to the TRAFAC class myosin-kinesin ATPase superfamily. Kinesin family. KIF27 subfamily. In terms of assembly, interacts with STK36.

The protein resides in the cytoplasm. It localises to the cytoskeleton. The protein localises to the cell projection. It is found in the cilium. In terms of biological role, plays an essential role in motile ciliogenesis. The polypeptide is Kinesin-like protein KIF27 (Kif27) (Mus musculus (Mouse)).